We begin with the raw amino-acid sequence, 612 residues long: Dihydroxy-acid dehydratase (612 aa).

Aspartate 81 lines the Mg(2+) pocket. Cysteine 122 provides a ligand contact to [2Fe-2S] cluster. Residues aspartate 123 and lysine 124 each contribute to the Mg(2+) site. N6-carboxylysine is present on lysine 124. Cysteine 195 contributes to the [2Fe-2S] cluster binding site. Position 491 (glutamate 491) interacts with Mg(2+). Serine 517 serves as the catalytic Proton acceptor.

Belongs to the IlvD/Edd family. As to quaternary structure, homodimer. The cofactor is [2Fe-2S] cluster. It depends on Mg(2+) as a cofactor.

It carries out the reaction (2R)-2,3-dihydroxy-3-methylbutanoate = 3-methyl-2-oxobutanoate + H2O. The catalysed reaction is (2R,3R)-2,3-dihydroxy-3-methylpentanoate = (S)-3-methyl-2-oxopentanoate + H2O. Its pathway is amino-acid biosynthesis; L-isoleucine biosynthesis; L-isoleucine from 2-oxobutanoate: step 3/4. It functions in the pathway amino-acid biosynthesis; L-valine biosynthesis; L-valine from pyruvate: step 3/4. In terms of biological role, functions in the biosynthesis of branched-chain amino acids. Catalyzes the dehydration of (2R,3R)-2,3-dihydroxy-3-methylpentanoate (2,3-dihydroxy-3-methylvalerate) into 2-oxo-3-methylpentanoate (2-oxo-3-methylvalerate) and of (2R)-2,3-dihydroxy-3-methylbutanoate (2,3-dihydroxyisovalerate) into 2-oxo-3-methylbutanoate (2-oxoisovalerate), the penultimate precursor to L-isoleucine and L-valine, respectively. The sequence is that of Dihydroxy-acid dehydratase from Psychromonas ingrahamii (strain DSM 17664 / CCUG 51855 / 37).